The primary structure comprises 346 residues: Low specificity L-threonine aldolase (346 aa).

An N6-(pyridoxal phosphate)lysine modification is found at Lys207.

Belongs to the threonine aldolase family. Homotetramer. The cofactor is pyridoxal 5'-phosphate.

It catalyses the reaction L-threonine = acetaldehyde + glycine. The catalysed reaction is L-allo-threonine = acetaldehyde + glycine. Functionally, catalyzes the cleavage of L-allo-threonine and L-threonine to glycine and acetaldehyde. This chain is Low specificity L-threonine aldolase (ltaE), found in Pseudomonas aeruginosa (strain ATCC 15692 / DSM 22644 / CIP 104116 / JCM 14847 / LMG 12228 / 1C / PRS 101 / PAO1).